A 546-amino-acid polypeptide reads, in one-letter code: Hexose oxidase (546 aa).

The FAD-binding PCMH-type domain maps to 40–222 (IGTNIDFVYV…TKYYFKDLPM (183 aa)). A cross-link (6-(S-cysteinyl)-8alpha-(pros-histidyl)-FAD (His-Cys)) is located at residues 79-138 (HCYEDFVFDECVKAIINVTGLVESGYDDDRGYFVSSGDTNWGSFKTLFRDHGRVLPGGSC). Residues Asn95 and Asn358 are each glycosylated (N-linked (GlcNAc...) asparagine).

This sequence belongs to the oxygen-dependent FAD-linked oxidoreductase family. Homodimer. FAD is required as a cofactor. In terms of processing, cleaved into 40 kDa and 29 kDa cleavage products, but the 2 polypeptide chains do not separate and seem to be physically linked together. The FAD cofactor is bound via a bicovalent 6-S-cysteinyl, 8alpha-N1-histidyl FAD linkage.

It catalyses the reaction beta-D-glucose + O2 = D-glucono-1,5-lactone + H2O2. It carries out the reaction D-galactose + O2 = D-galactono-1,5-lactone + H2O2. The enzyme catalyses D-maltose + O2 = D-maltobiono-1,5-lactone + H2O2. The catalysed reaction is D-cellobiose + O2 = D-cellobiono-1,5-lactone + H2O2. It catalyses the reaction beta-lactose + O2 = lactobiono-1,5-lactone + H2O2. Catalyzes the selective oxidation of C1 hydroxyl moieties on mono- and disaccharides with concomitant reduction of molecular oxygen to hydrogen peroxide. This results in the formation of the corresponding lactones, which typically undergo spontaneous hydrolysis. Hexose oxidase is able to oxidize a variety of substrates including D-glucose, D-galactose, maltose, cellobiose, and lactose. The chain is Hexose oxidase (HOX) from Chondrus crispus (Carrageen Irish moss).